The following is a 313-amino-acid chain: Ribosomal RNA small subunit methyltransferase H (313 aa).

S-adenosyl-L-methionine is bound by residues 35 to 37 (GGH), Asp55, Phe80, Asp102, and Gln109.

This sequence belongs to the methyltransferase superfamily. RsmH family.

Its subcellular location is the cytoplasm. It catalyses the reaction cytidine(1402) in 16S rRNA + S-adenosyl-L-methionine = N(4)-methylcytidine(1402) in 16S rRNA + S-adenosyl-L-homocysteine + H(+). Functionally, specifically methylates the N4 position of cytidine in position 1402 (C1402) of 16S rRNA. This is Ribosomal RNA small subunit methyltransferase H from Shewanella woodyi (strain ATCC 51908 / MS32).